The following is a 282-amino-acid chain: ATP phosphoribosyltransferase (282 aa).

It belongs to the ATP phosphoribosyltransferase family. Long subfamily. The cofactor is Mg(2+).

It is found in the cytoplasm. The enzyme catalyses 1-(5-phospho-beta-D-ribosyl)-ATP + diphosphate = 5-phospho-alpha-D-ribose 1-diphosphate + ATP. Its pathway is amino-acid biosynthesis; L-histidine biosynthesis; L-histidine from 5-phospho-alpha-D-ribose 1-diphosphate: step 1/9. With respect to regulation, feedback inhibited by histidine. Its function is as follows. Catalyzes the condensation of ATP and 5-phosphoribose 1-diphosphate to form N'-(5'-phosphoribosyl)-ATP (PR-ATP). Has a crucial role in the pathway because the rate of histidine biosynthesis seems to be controlled primarily by regulation of HisG enzymatic activity. This is ATP phosphoribosyltransferase from Pyrobaculum calidifontis (strain DSM 21063 / JCM 11548 / VA1).